The sequence spans 473 residues: Cholesterol 22-monohydroxylase CYP90B52 (473 aa).

The helical transmembrane segment at 2–22 threads the bilayer; it reads EGLLLLLPTAIIALYLYISLI. Position 422 (Cys-422) interacts with heme.

Belongs to the cytochrome P450 family. As to expression, mainly expressed in leaves and roots and, at low levels, in fruits and stems.

It is found in the membrane. The enzyme catalyses cholesterol + reduced [NADPH--hemoprotein reductase] + O2 = (22S)-22-hydroxycholesterol + oxidized [NADPH--hemoprotein reductase] + H2O + H(+). Its pathway is steroid metabolism; cholesterol metabolism. Its function is as follows. Canonical brassinosteroid (BR)-biosynthetic enzyme capable of converting cholesterol to 22S-hydroxycholesterol via sterol-C22 hydroxylation. This is Cholesterol 22-monohydroxylase CYP90B52 from Paris polyphylla (Daiswa polyphylla).